Reading from the N-terminus, the 316-residue chain is Olfactory receptor 1165 (316 aa).

At 1–28 the chain is on the extracellular side; it reads MMLDLGNESSVTMFILSGFSEYPHLHAP. N-linked (GlcNAc...) asparagine glycosylation is present at N7. The chain crosses the membrane as a helical span at residues 29–50; that stretch reads LFLLFFMIYTVTLIGNLGIIVV. The Cytoplasmic segment spans residues 51 to 61; sequence RKVNPKLHTPM. Residues 62–80 form a helical membrane-spanning segment; it reads YFFLSHLSFLDICYSSVFT. Residues 81 to 99 lie on the Extracellular side of the membrane; it reads PKLLEILIVEDRTISFKGC. C99 and C181 are oxidised to a cystine. The helical transmembrane segment at 100–122 threads the bilayer; it reads MTQFFLICAFVITEMFMLAVMAY. The Cytoplasmic segment spans residues 123–141; the sequence is DRFVAVCNPLLYTVSMSPK. A helical membrane pass occupies residues 142 to 166; the sequence is LCAFLVAGTYMWGVLCSLTITYSLL. Topologically, residues 167–205 are extracellular; the sequence is QLSYCGPNIINHFGCEYSAILSLSCSDPTFSQVVCLTIS. Residues 206-228 form a helical membrane-spanning segment; that stretch reads IFNETCSLLIILASYVFIVVTII. Residues 229–239 are Cytoplasmic-facing; the sequence is KMPSKGGLQKA. The helical transmembrane segment at 240–263 threads the bilayer; it reads FSTCSSHLTAISIFHGIILLLYCV. Over 264–268 the chain is Extracellular; sequence PNSKN. A helical membrane pass occupies residues 269 to 291; it reads SWLVVKVATVLFTVMIPMLNPLI. Residues 292–316 lie on the Cytoplasmic side of the membrane; sequence YSLRNKDVKGTVSRLMHLKLQAHST.

It belongs to the G-protein coupled receptor 1 family.

Its subcellular location is the cell membrane. In terms of biological role, olfactory receptor. This is Olfactory receptor 1165 from Mus musculus (Mouse).